The chain runs to 1342 residues: Putative aldehyde oxidase-like protein (1342 aa).

The tract at residues 1-23 is disordered; the sequence is MSDCNSGGGERRPNARATDAPPV. Residues 221–408 form the FAD-binding PCMH-type domain; the sequence is ISSPREGWYC…LSIFIPHWAS (188 aa).

Belongs to the xanthine dehydrogenase family.

The chain is Putative aldehyde oxidase-like protein from Oryza sativa subsp. japonica (Rice).